A 312-amino-acid chain; its full sequence is Type II methyltransferase M.NgoMIV (312 aa).

The 309-residue stretch at 3 to 311 folds into the SAM-dependent MTase C5-type domain; it reads FTSLEICAGA…RQIIKALKKE (309 aa). Cysteine 74 is an active-site residue.

Belongs to the class I-like SAM-binding methyltransferase superfamily. C5-methyltransferase family.

It carries out the reaction a 2'-deoxycytidine in DNA + S-adenosyl-L-methionine = a 5-methyl-2'-deoxycytidine in DNA + S-adenosyl-L-homocysteine + H(+). In terms of biological role, a methylase, recognizes the double-stranded sequence 5'-GCCGGC-3', methylates C-2 on both strands, and protects the DNA from cleavage by the NgoMIV endonuclease. This Neisseria gonorrhoeae protein is Type II methyltransferase M.NgoMIV (ngoMIVM).